Reading from the N-terminus, the 137-residue chain is Large-conductance mechanosensitive channel (137 aa).

2 helical membrane-spanning segments follow: residues 16 to 36 (VIDL…VDSI) and 83 to 103 (GNFI…FLMI).

Belongs to the MscL family. As to quaternary structure, homopentamer.

The protein resides in the cell inner membrane. Channel that opens in response to stretch forces in the membrane lipid bilayer. May participate in the regulation of osmotic pressure changes within the cell. The sequence is that of Large-conductance mechanosensitive channel from Methylibium petroleiphilum (strain ATCC BAA-1232 / LMG 22953 / PM1).